We begin with the raw amino-acid sequence, 79 residues long: Small ribosomal subunit protein bS16 (79 aa).

Belongs to the bacterial ribosomal protein bS16 family.

This is Small ribosomal subunit protein bS16 from Nitratidesulfovibrio vulgaris (strain ATCC 29579 / DSM 644 / CCUG 34227 / NCIMB 8303 / VKM B-1760 / Hildenborough) (Desulfovibrio vulgaris).